The chain runs to 208 residues: Small ribosomal subunit protein uS4 (208 aa).

Residues 98–158 enclose the S4 RNA-binding domain; that stretch reads RRLDNVVYRL…EKNRKISVVA (61 aa).

It belongs to the universal ribosomal protein uS4 family. Part of the 30S ribosomal subunit. Contacts protein S5. The interaction surface between S4 and S5 is involved in control of translational fidelity.

Functionally, one of the primary rRNA binding proteins, it binds directly to 16S rRNA where it nucleates assembly of the body of the 30S subunit. Its function is as follows. With S5 and S12 plays an important role in translational accuracy. The polypeptide is Small ribosomal subunit protein uS4 (Lawsonia intracellularis (strain PHE/MN1-00)).